A 346-amino-acid polypeptide reads, in one-letter code: N-acetyl-gamma-glutamyl-phosphate reductase (346 aa).

C149 is a catalytic residue.

Belongs to the NAGSA dehydrogenase family. Type 1 subfamily.

It localises to the cytoplasm. It carries out the reaction N-acetyl-L-glutamate 5-semialdehyde + phosphate + NADP(+) = N-acetyl-L-glutamyl 5-phosphate + NADPH + H(+). It functions in the pathway amino-acid biosynthesis; L-arginine biosynthesis; N(2)-acetyl-L-ornithine from L-glutamate: step 3/4. Its function is as follows. Catalyzes the NADPH-dependent reduction of N-acetyl-5-glutamyl phosphate to yield N-acetyl-L-glutamate 5-semialdehyde. This Geobacter sp. (strain M21) protein is N-acetyl-gamma-glutamyl-phosphate reductase.